Reading from the N-terminus, the 165-residue chain is Methylated-DNA--protein-cysteine methyltransferase (165 aa).

Residue cysteine 126 is the Nucleophile; methyl group acceptor of the active site.

This sequence belongs to the MGMT family.

It is found in the cytoplasm. It catalyses the reaction a 6-O-methyl-2'-deoxyguanosine in DNA + L-cysteinyl-[protein] = S-methyl-L-cysteinyl-[protein] + a 2'-deoxyguanosine in DNA. It carries out the reaction a 4-O-methyl-thymidine in DNA + L-cysteinyl-[protein] = a thymidine in DNA + S-methyl-L-cysteinyl-[protein]. Its function is as follows. Involved in the cellular defense against the biological effects of O6-methylguanine (O6-MeG) and O4-methylthymine (O4-MeT) in DNA. Repairs the methylated nucleobase in DNA by stoichiometrically transferring the methyl group to a cysteine residue in the enzyme. This is a suicide reaction: the enzyme is irreversibly inactivated. In Mycobacterium leprae (strain TN), this protein is Methylated-DNA--protein-cysteine methyltransferase.